The chain runs to 305 residues: Glycine--tRNA ligase alpha subunit (305 aa).

The protein belongs to the class-II aminoacyl-tRNA synthetase family. In terms of assembly, tetramer of two alpha and two beta subunits.

It localises to the cytoplasm. It carries out the reaction tRNA(Gly) + glycine + ATP = glycyl-tRNA(Gly) + AMP + diphosphate. This is Glycine--tRNA ligase alpha subunit from Streptococcus pyogenes serotype M18 (strain MGAS8232).